We begin with the raw amino-acid sequence, 26 residues long: Potassium channel toxin alpha-KTx6 OcyKTx1 (26 aa).

A disulfide bond links Cys-3 and Cys-24.

It belongs to the short scorpion toxin superfamily. Potassium channel inhibitor family. Alpha-KTx 06 subfamily. As to expression, expressed by the venom gland.

The protein localises to the secreted. Blocks voltage-gated potassium channels. In Opisthacanthus cayaporum (South American scorpion), this protein is Potassium channel toxin alpha-KTx6 OcyKTx1.